The chain runs to 121 residues: Large ribosomal subunit protein bL12 (121 aa).

This sequence belongs to the bacterial ribosomal protein bL12 family. In terms of assembly, homodimer. Part of the ribosomal stalk of the 50S ribosomal subunit. Forms a multimeric L10(L12)X complex, where L10 forms an elongated spine to which 2 to 4 L12 dimers bind in a sequential fashion. Binds GTP-bound translation factors.

Its function is as follows. Forms part of the ribosomal stalk which helps the ribosome interact with GTP-bound translation factors. Is thus essential for accurate translation. This is Large ribosomal subunit protein bL12 from Salmonella agona (strain SL483).